We begin with the raw amino-acid sequence, 325 residues long: Ribosomal RNA small subunit methyltransferase H (325 aa).

The tract at residues 1 to 28 is disordered; that stretch reads MTASQPLDQADQDSESSSAGSSAAETEH. Residues 15 to 24 show a composition bias toward low complexity; sequence ESSSAGSSAA. Residues 56 to 58, D82, Y110, D131, and Q138 each bind S-adenosyl-L-methionine; that span reads GGH. The tract at residues 303 to 325 is disordered; sequence TDEEVQANPRSRSAKLRVAKRVE. The segment covering 314–325 has biased composition (basic residues); sequence RSAKLRVAKRVE.

It belongs to the methyltransferase superfamily. RsmH family.

It localises to the cytoplasm. The catalysed reaction is cytidine(1402) in 16S rRNA + S-adenosyl-L-methionine = N(4)-methylcytidine(1402) in 16S rRNA + S-adenosyl-L-homocysteine + H(+). Functionally, specifically methylates the N4 position of cytidine in position 1402 (C1402) of 16S rRNA. The chain is Ribosomal RNA small subunit methyltransferase H from Rhodopirellula baltica (strain DSM 10527 / NCIMB 13988 / SH1).